The chain runs to 389 residues: Pyruvylated Gal-beta-1,3-epitope synthesis protein 2 (389 aa).

The Cytoplasmic segment spans residues 1–16; that stretch reads MTKLWVNFFSQKLLRL. The helical transmembrane segment at 17–37 threads the bilayer; it reads LIPSIIVVFAFAALFAIYSPI. Over 38–389 the chain is Lumenal; it reads QLGGINFYKR…WSNSFDLITA (352 aa).

It localises to the endoplasmic reticulum membrane. The protein localises to the golgi apparatus membrane. Involved in cell wall biogenesis. Has a role in the addition of Gal-beta1,3 moeities to galactomannans and their subsequent pyruvylation. Has a role in meiosis. The polypeptide is Pyruvylated Gal-beta-1,3-epitope synthesis protein 2 (pvg2) (Schizosaccharomyces pombe (strain 972 / ATCC 24843) (Fission yeast)).